The following is a 514-amino-acid chain: Cardiolipin synthase 2 (514 aa).

Helical transmembrane passes span 7-27 (LIFF…FIDV), 41-61 (ILGI…CVIF), and 71-91 (LTWL…YLLF). 2 PLD phosphodiesterase domains span residues 249–276 (INYR…GDEY) and 427–454 (EKGF…DMRS). Residues H254, K256, D261, H432, K434, and D439 contribute to the active site.

This sequence belongs to the phospholipase D family. Cardiolipin synthase subfamily.

It localises to the cell membrane. The enzyme catalyses 2 a 1,2-diacyl-sn-glycero-3-phospho-(1'-sn-glycerol) = a cardiolipin + glycerol. In terms of biological role, catalyzes the reversible phosphatidyl group transfer from one phosphatidylglycerol molecule to another to form cardiolipin (CL) (diphosphatidylglycerol) and glycerol. The chain is Cardiolipin synthase 2 (cls2) from Bacillus anthracis.